The following is a 592-amino-acid chain: Probable translation initiation factor IF-2 (592 aa).

The tr-type G domain occupies 5–226; the sequence is IRSPFVVVMG…AGVSQRFIPR (222 aa). The tract at residues 14–21 is G1; sequence GHVDVGKT. Residue 14-21 participates in GTP binding; sequence GHVDVGKT. Residues 39–43 form a G2 region; the sequence is MITQH. Positions 80–83 are G3; sequence DTPG. Residues 80-84 and 134-137 contribute to the GTP site; these read DTPGH and NKLD. The G4 stretch occupies residues 134-137; that stretch reads NKLD. Residues 202–204 form a G5 region; the sequence is SAV.

This sequence belongs to the TRAFAC class translation factor GTPase superfamily. Classic translation factor GTPase family. IF-2 subfamily.

In terms of biological role, function in general translation initiation by promoting the binding of the formylmethionine-tRNA to ribosomes. Seems to function along with eIF-2. The polypeptide is Probable translation initiation factor IF-2 (Pyrobaculum calidifontis (strain DSM 21063 / JCM 11548 / VA1)).